We begin with the raw amino-acid sequence, 273 residues long: SKA complex subunit 1 homolog (273 aa).

Residues 77–97 are a coiled coil; sequence KKLVQRSLKEEEKLQHMLANL.

Belongs to the SKA1 family.

This chain is SKA complex subunit 1 homolog, found in Zea mays (Maize).